The chain runs to 584 residues: Isocitrate dehydrogenase kinase/phosphatase (584 aa).

Residues 315–321 and K336 contribute to the ATP site; that span reads APGVKGM. D371 is an active-site residue.

The protein belongs to the AceK family.

It localises to the cytoplasm. The catalysed reaction is L-seryl-[isocitrate dehydrogenase] + ATP = O-phospho-L-seryl-[isocitrate dehydrogenase] + ADP + H(+). In terms of biological role, bifunctional enzyme which can phosphorylate or dephosphorylate isocitrate dehydrogenase (IDH) on a specific serine residue. This is a regulatory mechanism which enables bacteria to bypass the Krebs cycle via the glyoxylate shunt in response to the source of carbon. When bacteria are grown on glucose, IDH is fully active and unphosphorylated, but when grown on acetate or ethanol, the activity of IDH declines drastically concomitant with its phosphorylation. This Serratia proteamaculans (strain 568) protein is Isocitrate dehydrogenase kinase/phosphatase.